The primary structure comprises 240 residues: UDP-2,3-diacylglucosamine hydrolase (240 aa).

The Mn(2+) site is built by aspartate 8, histidine 10, aspartate 41, asparagine 79, and histidine 114. 79 to 80 is a substrate binding site; it reads NR. Aspartate 122, serine 160, asparagine 164, lysine 167, and histidine 195 together coordinate substrate. Mn(2+) is bound by residues histidine 195 and histidine 197.

Belongs to the LpxH family. Mn(2+) is required as a cofactor.

The protein localises to the cell inner membrane. The enzyme catalyses UDP-2-N,3-O-bis[(3R)-3-hydroxytetradecanoyl]-alpha-D-glucosamine + H2O = 2-N,3-O-bis[(3R)-3-hydroxytetradecanoyl]-alpha-D-glucosaminyl 1-phosphate + UMP + 2 H(+). Its pathway is glycolipid biosynthesis; lipid IV(A) biosynthesis; lipid IV(A) from (3R)-3-hydroxytetradecanoyl-[acyl-carrier-protein] and UDP-N-acetyl-alpha-D-glucosamine: step 4/6. Its function is as follows. Hydrolyzes the pyrophosphate bond of UDP-2,3-diacylglucosamine to yield 2,3-diacylglucosamine 1-phosphate (lipid X) and UMP by catalyzing the attack of water at the alpha-P atom. Involved in the biosynthesis of lipid A, a phosphorylated glycolipid that anchors the lipopolysaccharide to the outer membrane of the cell. The sequence is that of UDP-2,3-diacylglucosamine hydrolase from Escherichia coli O7:K1 (strain IAI39 / ExPEC).